The primary structure comprises 231 residues: Uridylate cyclase (231 aa).

A Guanylate cyclase domain is found at 46 to 178 (TVLYADLDGS…RAANYAAKLT (133 aa)). An a ribonucleoside 5'-triphosphate-binding site is contributed by tyrosine 49. Mn(2+) is bound by residues aspartate 51 and aspartate 95. Arginine 96 provides a ligand contact to a ribonucleoside 5'-triphosphate.

This sequence belongs to the adenylyl cyclase class-4/guanylyl cyclase family. Pyrimidine cyclase subfamily. As to quaternary structure, homodimer. The cofactor is Mn(2+).

The protein resides in the cytoplasm. It carries out the reaction UTP = 3',5'-cyclic UMP + diphosphate. In terms of biological role, pycsar (pyrimidine cyclase system for antiphage resistance) provides immunity against bacteriophage. The pyrimidine cyclase (PycC) synthesizes cyclic nucleotides in response to infection; these serve as specific second messenger signals. The signal activates the adjacent effector, leading to bacterial cell death and abortive phage infection. A clade B Pycsar system. The pyrimidine cyclase gene of a two-gene Pycsar system, generates cyclic UMP (cUMP) from UTP probably in response to bacteriophage infection. Expression of this and adjacent effector XpPycTIR (AC P0DV29) confers resistance to bacteriophage T7. When cells expressing the Pycsar system are infected phage T7 at low multiplicity of infection (0.2 MOI) the culture survives, at 2.0 MOI bacteria enter growth arrest. The same cells enter growth arrest after exposure to 2.5 mM cUMP but not cCMP; the effector protein responds only to the cUMP produced by its cognate NTP cyclase. In Xanthomonas perforans, this protein is Uridylate cyclase.